The chain runs to 130 residues: Small ribosomal subunit protein uS11 (130 aa).

It belongs to the universal ribosomal protein uS11 family. In terms of assembly, part of the 30S ribosomal subunit. Interacts with proteins S7 and S18. Binds to IF-3.

Located on the platform of the 30S subunit, it bridges several disparate RNA helices of the 16S rRNA. Forms part of the Shine-Dalgarno cleft in the 70S ribosome. This is Small ribosomal subunit protein uS11 from Prochlorococcus marinus (strain AS9601).